A 174-amino-acid chain; its full sequence is Disulfide bond formation protein B (174 aa).

Over 1-14 the chain is Cytoplasmic; the sequence is MLHIFYIYSKSRKF. The chain crosses the membrane as a helical span at residues 15 to 31; the sequence is WAILICSSISLISIALL. Residues 32–49 are Periplasmic-facing; it reads NQFFFLLKPCILCIYQRC. A disulfide bridge links Cys-41 with Cys-44. A helical transmembrane segment spans residues 50–65; that stretch reads SLFGITIAGLIALISP. Over 66 to 72 the chain is Cytoplasmic; it reads KTTLLRL. A helical transmembrane segment spans residues 73–90; that stretch reads FSIFIWLYSAIKGLYFSN. The Periplasmic segment spans residues 91 to 146; it reads IHMQTTLHPSSSLTCDLFVSFPNWLPLNKWYPIIFDSKISNCYSYPQYLLYLEISQ. A disulfide bond links Cys-105 and Cys-132. The helical transmembrane segment at 147 to 165 threads the bilayer; it reads WMLLFFLIYLIIAIFTIIS. Residues 166–174 lie on the Cytoplasmic side of the membrane; the sequence is QCHNLFQKK.

The protein belongs to the DsbB family.

It is found in the cell inner membrane. Functionally, required for disulfide bond formation in some periplasmic proteins. Acts by oxidizing the DsbA protein. The protein is Disulfide bond formation protein B of Blochmanniella floridana.